The following is a 219-amino-acid chain: ATP-dependent dethiobiotin synthetase BioD (219 aa).

12 to 17 provides a ligand contact to ATP; sequence GVGKTI. A Mg(2+)-binding site is contributed by T16. K32 is an active-site residue. Residues D43 and 96–99 each bind ATP; that span reads ETSG. 2 residues coordinate Mg(2+): D43 and E96.

Belongs to the dethiobiotin synthetase family. As to quaternary structure, homodimer. Mg(2+) serves as cofactor.

It is found in the cytoplasm. The enzyme catalyses (7R,8S)-7,8-diammoniononanoate + CO2 + ATP = (4R,5S)-dethiobiotin + ADP + phosphate + 3 H(+). It participates in cofactor biosynthesis; biotin biosynthesis; biotin from 7,8-diaminononanoate: step 1/2. Catalyzes a mechanistically unusual reaction, the ATP-dependent insertion of CO2 between the N7 and N8 nitrogen atoms of 7,8-diaminopelargonic acid (DAPA, also called 7,8-diammoniononanoate) to form a ureido ring. This Chlamydia pneumoniae (Chlamydophila pneumoniae) protein is ATP-dependent dethiobiotin synthetase BioD.